The following is a 122-amino-acid chain: Large ribosomal subunit protein uL14 (122 aa).

The protein belongs to the universal ribosomal protein uL14 family. In terms of assembly, part of the 50S ribosomal subunit. Forms a cluster with proteins L3 and L19. In the 70S ribosome, L14 and L19 interact and together make contacts with the 16S rRNA in bridges B5 and B8.

Functionally, binds to 23S rRNA. Forms part of two intersubunit bridges in the 70S ribosome. In Laribacter hongkongensis (strain HLHK9), this protein is Large ribosomal subunit protein uL14.